A 516-amino-acid chain; its full sequence is GTPase Obg (516 aa).

In terms of domain architecture, Obg spans 4 to 161 (PTFVDRVTLH…LEIVLELKVV (158 aa)). The OBG-type G domain maps to 162–332 (ADIGLVGFPS…LTFAMAGIVE (171 aa)). GTP is bound by residues 168–175 (GFPSAGKS), 193–197 (FTTLV), 214–217 (DVPG), 284–287 (NKVD), and 313–315 (SAA). Positions 175 and 195 each coordinate Mg(2+). One can recognise an OCT domain in the interval 351–432 (PSVDGSDAFT…ENAVVFDFKP (82 aa)). A compositionally biased stretch (basic and acidic residues) spans 466-491 (AMADRAEGETRADVARRLDRPAREDG). Residues 466–516 (AMADRAEGETRADVARRLDRPAREDGGAYGPQSYEIGGRDDPDWAEEDLGE) form a disordered region.

The protein belongs to the TRAFAC class OBG-HflX-like GTPase superfamily. OBG GTPase family. As to quaternary structure, monomer. Mg(2+) is required as a cofactor.

The protein localises to the cytoplasm. Its function is as follows. An essential GTPase which binds GTP, GDP and possibly (p)ppGpp with moderate affinity, with high nucleotide exchange rates and a fairly low GTP hydrolysis rate. Plays a role in control of the cell cycle, stress response, ribosome biogenesis and in those bacteria that undergo differentiation, in morphogenesis control. The polypeptide is GTPase Obg (Nocardioides sp. (strain ATCC BAA-499 / JS614)).